We begin with the raw amino-acid sequence, 347 residues long: Uroporphyrinogen decarboxylase (347 aa).

Substrate is bound by residues 24 to 28 (RQAGR), phenylalanine 42, aspartate 73, tyrosine 150, threonine 205, and histidine 320.

This sequence belongs to the uroporphyrinogen decarboxylase family. Homodimer.

Its subcellular location is the cytoplasm. The catalysed reaction is uroporphyrinogen III + 4 H(+) = coproporphyrinogen III + 4 CO2. Its pathway is porphyrin-containing compound metabolism; protoporphyrin-IX biosynthesis; coproporphyrinogen-III from 5-aminolevulinate: step 4/4. Its function is as follows. Catalyzes the decarboxylation of four acetate groups of uroporphyrinogen-III to yield coproporphyrinogen-III. The sequence is that of Uroporphyrinogen decarboxylase from Gloeobacter violaceus (strain ATCC 29082 / PCC 7421).